The primary structure comprises 258 residues: Acetylglutamate kinase (258 aa).

Substrate contacts are provided by residues 41-42 (GG), R63, and N156.

The protein belongs to the acetylglutamate kinase family. ArgB subfamily.

It localises to the cytoplasm. It carries out the reaction N-acetyl-L-glutamate + ATP = N-acetyl-L-glutamyl 5-phosphate + ADP. The protein operates within amino-acid biosynthesis; L-arginine biosynthesis; N(2)-acetyl-L-ornithine from L-glutamate: step 2/4. In terms of biological role, catalyzes the ATP-dependent phosphorylation of N-acetyl-L-glutamate. The sequence is that of Acetylglutamate kinase from Bacillus pumilus (strain SAFR-032).